Here is a 373-residue protein sequence, read N- to C-terminus: NADPH-dependent 3-keto-steroid reductase Hsd3b5 (373 aa).

NADP(+) is bound by residues 10-15 (GAGGFL), Tyr-155, and Lys-159. Lys-159 acts as the Proton donor in catalysis. The helical transmembrane segment at 288–308 (LSLLYWLAFLLETVSFLLRPV) threads the bilayer. At Lys-350 the chain carries N6-acetyllysine.

The protein belongs to the 3-beta-HSD family. In terms of tissue distribution, expressed in the male liver, starting in late puberty.

It localises to the endoplasmic reticulum membrane. It is found in the mitochondrion membrane. It carries out the reaction a 3beta-hydroxysteroid + NADP(+) = a 3-oxosteroid + NADPH + H(+). The enzyme catalyses 5alpha-androstane-3beta,17beta-diol + NADP(+) = 17beta-hydroxy-5alpha-androstan-3-one + NADPH + H(+). The protein operates within steroid metabolism. In terms of biological role, responsible for the reduction of the oxo group on the C-3 of 5alpha-androstane steroids. Catalyzes the conversion of dihydrotestosterone to its inactive form 5alpha-androstanediol, that does not bind androgen receptor/AR. Does not function as an isomerase. The sequence is that of NADPH-dependent 3-keto-steroid reductase Hsd3b5 from Mus musculus (Mouse).